Reading from the N-terminus, the 186-residue chain is Elongation factor P (186 aa).

The protein belongs to the elongation factor P family.

The protein resides in the cytoplasm. It functions in the pathway protein biosynthesis; polypeptide chain elongation. Functionally, involved in peptide bond synthesis. Stimulates efficient translation and peptide-bond synthesis on native or reconstituted 70S ribosomes in vitro. Probably functions indirectly by altering the affinity of the ribosome for aminoacyl-tRNA, thus increasing their reactivity as acceptors for peptidyl transferase. The protein is Elongation factor P of Neisseria gonorrhoeae (strain ATCC 700825 / FA 1090).